Reading from the N-terminus, the 1400-residue chain is DNA-directed RNA polymerase subunit beta' (1400 aa).

4 residues coordinate Zn(2+): Cys-71, Cys-73, Cys-86, and Cys-89. Residues Asp-462, Asp-464, and Asp-466 each coordinate Mg(2+). Cys-820, Cys-893, Cys-900, and Cys-903 together coordinate Zn(2+).

It belongs to the RNA polymerase beta' chain family. As to quaternary structure, the RNAP catalytic core consists of 2 alpha, 1 beta, 1 beta' and 1 omega subunit. When a sigma factor is associated with the core the holoenzyme is formed, which can initiate transcription. Mg(2+) serves as cofactor. The cofactor is Zn(2+).

It carries out the reaction RNA(n) + a ribonucleoside 5'-triphosphate = RNA(n+1) + diphosphate. Functionally, DNA-dependent RNA polymerase catalyzes the transcription of DNA into RNA using the four ribonucleoside triphosphates as substrates. This Methylobacterium nodulans (strain LMG 21967 / CNCM I-2342 / ORS 2060) protein is DNA-directed RNA polymerase subunit beta'.